The following is a 153-amino-acid chain: Virion assembly protein OPG100 (153 aa).

This sequence belongs to the orthopoxvirus OPG100 family. Homodimer. Part of a complex composed of the kinase OPG054, OPG092, OPG114, OPG115, OPG142 and OPG157. Interacts with OPG175.

It is found in the virion. The protein localises to the host cytoplasm. Its function is as follows. Late protein which is a part of a large complex required for early virion morphogenesis. This complex participates in the formation of virosomes and the incorporation of virosomal contents into nascent immature virions. Plays a role in DNA packaging during immature virions (IV) formation. The protein is Virion assembly protein OPG100 (OPG100) of Vaccinia virus (strain Western Reserve) (VACV).